The primary structure comprises 308 residues: Polyketide transferase claH (308 aa).

The segment at 50–280 is abhydrolase domain; that stretch reads SDIAVYFSQQ…RVEVAAGKSH (231 aa).

It belongs to the polyketide transferase af380 family.

It participates in secondary metabolite biosynthesis. Its function is as follows. Polyketide transferase; part of the cla gene cluster that produces clavatol and ortho-quinone methide. The clavatol biosynthesis cluster cla and the terrestric acid cluster tra are both involved in the production of peniphenones and penilactones. The non-reducing PKS claF is responsible for the formation of clavatol from successive condensations of 3 malonyl-CoA units, presumably with a simple acetyl-CoA starter unit, and 2 methylation steps. The esterase claE probably collaborates with claF by catalyzing the hydrolysis of ACP-bound acyl intermediates to free the ACP from stalled intermediates. The clavatol oxidase claD then converts clavatol to hydroxyclavatol. Spontaneous dehydration of hydroxyclavatol leads to the accumulation of the highly active ortho-quinone methide. On the other hand, the PKS-NRPS hybrid traA is involved in the formation of crustosic acid, with the help of traB and traD. The polyketide synthase module (PKS) of traA is responsible for the synthesis of the polyketide backbone via the condensation of an acetyl-CoA starter unit with 3 malonyl-CoA units. The downstream nonribosomal peptide synthetase (NRPS) module then amidates the carboxyl end of the polyketide with L-malic acid. Because traA lacks a designated enoylreductase (ER) domain, the required activity is provided the enoyl reductase traG. Crustosic acid undergoes decarboxylation and isomerization to the terrestric acid, catalyzed by the 2-oxoglutarate-dependent dioxygenase traH. Both acids are further converted to the 2 gamma-butyrolactones (R)-5-methyltetronic acid and (S)-5-carboxylmethyltetronic acid, with involvement of the cytochrome P450 monooxygenase claJ. Spontaneous addition of the methide to these gamma-butyrolactones leads to peniphenone D and penilactone D, which undergo again stereospecific attacking by methide to give penilactones A and B. The function of the polyketide transferase claH has not been investigated yet. The protein is Polyketide transferase claH of Penicillium crustosum (Blue mold fungus).